A 317-amino-acid chain; its full sequence is Melanocyte-stimulating hormone receptor (317 aa).

Over 1–37 (MPVQGSQRRLLGSLNSTPTATPHLGLAANQTGARCLE) the chain is Extracellular. A glycan (N-linked (GlcNAc...) asparagine) is linked at Asn29. The chain crosses the membrane as a helical span at residues 38-63 (VSVPDGLFLSLGLVSLVENVLVVTAI). Residues 64–72 (AKNRNLHSP) lie on the Cytoplasmic side of the membrane. The chain crosses the membrane as a helical span at residues 73–93 (MYCFICCLALSDLLVSGSNML). Residues 94 to 118 (ETAVTLLLEAGVLAARAAVVQQLDN) lie on the Extracellular side of the membrane. Residues 119-140 (VIDVITCSSMLSSLCFLGAIAV) form a helical membrane-spanning segment. At 141-163 (DRYISIFYALRYHSIVTLPRARR) the chain is on the cytoplasmic side. Residues 164–183 (AVAAIWVASVLFSTLFIAYY) form a helical membrane-spanning segment. The Extracellular portion of the chain corresponds to 184–191 (DHAAVLLC). Residues 192-211 (LVIFFLAMLVLMAVLYVHML) traverse the membrane as a helical segment. The Cytoplasmic portion of the chain corresponds to 212–240 (ARACQHAQGIARLHKRQRLAHQGFGLKGA). Residues 241 to 266 (ATLTILLGIFFLCWGPFFLHLTLIVL) traverse the membrane as a helical segment. The Extracellular segment spans residues 267 to 279 (CPQHPTCSCIFKN). The helical transmembrane segment at 280–300 (FNLFLALIICNAIIDPLIYAF) threads the bilayer. Topologically, residues 301 to 317 (RSQELRRTLKEVLLCSW) are cytoplasmic. Residue Cys315 is the site of S-palmitoyl cysteine attachment.

The protein belongs to the G-protein coupled receptor 1 family. In terms of assembly, interacts with MGRN1, but does not undergo MGRN1-mediated ubiquitination; this interaction competes with GNAS-binding and thus inhibits agonist-induced cAMP production. Interacts with OPN3; the interaction results in a decrease in MC1R-mediated cAMP signaling and ultimately a decrease in melanin production in melanocytes.

It localises to the cell membrane. Its function is as follows. Receptor for MSH (alpha, beta and gamma) and ACTH. The activity of this receptor is mediated by G proteins which activate adenylate cyclase. Mediates melanogenesis, the production of eumelanin (black/brown) and phaeomelanin (red/yellow), via regulation of cAMP signaling in melanocytes. The sequence is that of Melanocyte-stimulating hormone receptor (MC1R) from Papio anubis (Olive baboon).